The following is a 205-amino-acid chain: MQEYNQPLRIGVGGPVGSGKTALLEVLCKAMRDSYQIAVVTNDIYTQEDAKILTRAQALDADRIIGVETGGCPHTAIREDASMNLAAVEELAMRHKNLDIVFVESGGDNLSATFSPELADLTIYVIDVAEGEKIPRKGGPGITHSDLLVINKIDLAPYVGASLEVMEADTAKMRPVKPYVFTNLKEKVGLETIIDFIIDKGMLRR.

Position 14–21 (14–21 (GPVGSGKT)) interacts with GTP.

It belongs to the SIMIBI class G3E GTPase family. UreG subfamily. In terms of assembly, homodimer. UreD, UreF and UreG form a complex that acts as a GTP-hydrolysis-dependent molecular chaperone, activating the urease apoprotein by helping to assemble the nickel containing metallocenter of UreC. The UreE protein probably delivers the nickel.

It is found in the cytoplasm. In terms of biological role, facilitates the functional incorporation of the urease nickel metallocenter. This process requires GTP hydrolysis, probably effectuated by UreG. The sequence is that of Urease accessory protein UreG from Proteus mirabilis (strain HI4320).